Reading from the N-terminus, the 223-residue chain is Endonuclease NucS (223 aa).

The protein belongs to the NucS endonuclease family.

It localises to the cytoplasm. In terms of biological role, cleaves both 3' and 5' ssDNA extremities of branched DNA structures. The sequence is that of Endonuclease NucS from Mycobacterium sp. (strain JLS).